The following is a 366-amino-acid chain: Envelope glycoprotein M (366 aa).

The Intravirion portion of the chain corresponds to 1 to 17 (MMKASRSDTFMLRTWIQ). A helical membrane pass occupies residues 18–38 (LLVLFVIMFIMSAILPIAASV). Residues 39–83 (EGLGFPCYFPNLVDYSLLNLTLRNAAKHLTPTLFLEAPELFVYIT) are Virion surface-facing. Residues 84 to 104 (WSVLVDLASAIYYVVGALAIL) traverse the membrane as a helical segment. Residues 105-113 (QARKTHLTS) lie on the Intravirion side of the membrane. A helical transmembrane segment spans residues 114–134 (MITLQTWINLVGSHTMLFIGI). The Virion surface portion of the chain corresponds to 135–153 (ARMWTLQLFIHVLSYKHVM). The chain crosses the membrane as a helical span at residues 154–174 (LAAFIYFLHFCLSYMHTLSLV). Residues 175 to 209 (SRNSPKWSVLLMEQHIPKQSLLSTILDYGKPLCVN) are Intravirion-facing. The helical transmembrane segment at 210–230 (MYLSLLALEMLVFSLGFMMAI) threads the bilayer. Topologically, residues 231–235 (GNSFY) are virion surface. Residues 236–256 (ILVSDTVLASINLYFVLTTFW) traverse the membrane as a helical segment. Topologically, residues 257 to 269 (YMMTEMFLQDYLK) are intravirion. The chain crosses the membrane as a helical span at residues 270 to 290 (LQFGFYLGVFSGSLILLLPVL). At 291–304 (RYEAVFVSANLHKT) the chain is on the virion surface side. Residues 305–325 (VAVNIAMIPAMCVIAMMFRLF) traverse the membrane as a helical segment. Over 326–366 (RYSQQVRKPENSYTPLPKRFKKRRQKQDQQLIMVETSDEEL) the chain is Intravirion.

Belongs to the herpesviridae glycoprotein M family. In terms of assembly, interacts (via N-terminus) with gN (via N-terminus). The gM-gN heterodimer forms the gCII complex.

It is found in the virion membrane. The protein resides in the host Golgi apparatus. Its subcellular location is the host trans-Golgi network. It localises to the host endosome membrane. The protein localises to the host nucleus inner membrane. Its function is as follows. Envelope glycoprotein important for virion assembly and egress. Plays a role in the correct incorporation of gH-gL into virion membrane. Directs the glycoprotein N (gN) to the host trans-Golgi network. This Saimiri sciureus (Common squirrel monkey) protein is Envelope glycoprotein M.